The chain runs to 206 residues: Ribosomal RNA small subunit methyltransferase G (206 aa).

S-adenosyl-L-methionine contacts are provided by residues Gly-71, Phe-76, 125-126 (IE), and Arg-139.

It belongs to the methyltransferase superfamily. RNA methyltransferase RsmG family.

It is found in the cytoplasm. The enzyme catalyses guanosine(527) in 16S rRNA + S-adenosyl-L-methionine = N(7)-methylguanosine(527) in 16S rRNA + S-adenosyl-L-homocysteine. Its function is as follows. Specifically methylates the N7 position of guanine in position 527 of 16S rRNA. The chain is Ribosomal RNA small subunit methyltransferase G from Cereibacter sphaeroides (strain ATCC 17023 / DSM 158 / JCM 6121 / CCUG 31486 / LMG 2827 / NBRC 12203 / NCIMB 8253 / ATH 2.4.1.) (Rhodobacter sphaeroides).